We begin with the raw amino-acid sequence, 171 residues long: uncharacterized protein (171 aa).

Disordered regions lie at residues 27-53 (DCPGAGNNNREPSISTRGRTSSSKMVL) and 82-108 (GHLEGHPPRVSQESAPAGHTGISPSSS). Residues 32–50 (GNNNREPSISTRGRTSSSK) show a composition bias toward polar residues.

This is an uncharacterized protein from Homo sapiens (Human).